A 382-amino-acid polypeptide reads, in one-letter code: Ribosomal RNA large subunit methyltransferase G (382 aa).

Belongs to the methyltransferase superfamily. RlmG family.

The protein resides in the cytoplasm. It carries out the reaction guanosine(1835) in 23S rRNA + S-adenosyl-L-methionine = N(2)-methylguanosine(1835) in 23S rRNA + S-adenosyl-L-homocysteine + H(+). In terms of biological role, specifically methylates the guanine in position 1835 (m2G1835) of 23S rRNA. The sequence is that of Ribosomal RNA large subunit methyltransferase G from Aliivibrio salmonicida (strain LFI1238) (Vibrio salmonicida (strain LFI1238)).